The sequence spans 271 residues: Aquaporin-2 (271 aa).

The Cytoplasmic segment spans residues 1 to 11 (MWELRSIAFSR). Residues 12-32 (AVLAEFLATLLFVFFGLGSAL) traverse the membrane as a helical segment. Topologically, residues 33 to 40 (NWPQALPS) are extracellular. Residues 41–59 (VLQIAMAFGLAIGTLVQAL) traverse the membrane as a helical segment. The Cytoplasmic segment spans residues 60–64 (GHVSG). Residues 65-74 (AHINPAVTVA) constitute an intramembrane region (discontinuously helical). The NPA 1 motif lies at 68–70 (NPA). Over 75 to 85 (CLVGCHVSFLR) the chain is Cytoplasmic. The chain crosses the membrane as a helical span at residues 86 to 107 (AVFYVAAQLLGAVAGAALLHEI). The Extracellular portion of the chain corresponds to 108-127 (TPPAIRGDLAVNALNNNSTA). 2 N-linked (GlcNAc...) asparagine glycosylation sites follow: asparagine 123 and asparagine 124. The helical transmembrane segment at 128-148 (GQAVTVELFLTLQLVLCIFPS) threads the bilayer. At 149 to 156 (TDKRRGKQ) the chain is on the cytoplasmic side. A helical transmembrane segment spans residues 157 to 176 (LGHPALSIGFSVALGHLLGI). The Extracellular portion of the chain corresponds to 177 to 180 (HYTG). The segment at residues 181–193 (CSMNPARSLAPAI) is an intramembrane region (discontinuously helical). The NPA 2 signature appears at 184–186 (NPA). Over 194–201 (VTGKFDDH) the chain is Extracellular. Residues 202-222 (WVFWIGPLVGAIVASLLYNYV) form a helical membrane-spanning segment. Residues 223 to 271 (LFPPAKSLSERLAVLKGLEPDTDWEEREVRRRQSVELHSPQSLPRGTKA) are Cytoplasmic-facing. The tract at residues 249 to 271 (REVRRRQSVELHSPQSLPRGTKA) is disordered. Position 256 is a phosphoserine (serine 256). The span at 261–271 (SPQSLPRGTKA) shows a compositional bias: polar residues.

It belongs to the MIP/aquaporin (TC 1.A.8) family. As to quaternary structure, homotetramer. In terms of processing, ser-256 phosphorylation is necessary and sufficient for expression at the apical membrane. Endocytosis is not phosphorylation-dependent. N-glycosylated. In terms of tissue distribution, expressed in renal collecting tubules.

Its subcellular location is the apical cell membrane. The protein localises to the basolateral cell membrane. The protein resides in the cell membrane. It is found in the cytoplasmic vesicle membrane. It localises to the golgi apparatus. Its subcellular location is the trans-Golgi network membrane. It carries out the reaction H2O(in) = H2O(out). The catalysed reaction is glycerol(in) = glycerol(out). Forms a water-specific channel that provides the plasma membranes of renal collecting duct with high permeability to water, thereby permitting water to move in the direction of an osmotic gradient. Could also be permeable to glycerol. The chain is Aquaporin-2 from Ovis aries (Sheep).